The sequence spans 45 residues: AAEVAPCELTVAPSGLSFCDKVVGTGPQAVKGQLIKAHYVGRLEN.

This sequence belongs to the FKBP-type PPIase family. As to expression, expressed in leaves, but not in roots.

The protein resides in the plastid. It is found in the chloroplast thylakoid lumen. The catalysed reaction is [protein]-peptidylproline (omega=180) = [protein]-peptidylproline (omega=0). Its function is as follows. PPIases accelerate the folding of proteins. It catalyzes the cis-trans isomerization of proline imidic peptide bonds in oligopeptides. This chain is FKBP-type peptidyl-prolyl cis-trans isomerase, chloroplastic, found in Vicia faba (Broad bean).